We begin with the raw amino-acid sequence, 932 residues long: Protocadherin gamma-A2 (932 aa).

A signal peptide spans 1–28 (MAALQKLPHCRKLFLLCFLLATLWEARA). 6 Cadherin domains span residues 29-133 (GQIR…APRF), 134-242 (GVEE…APVF), 243-347 (TQPE…APEF), 348-452 (YMTS…APAF), 453-562 (SRTS…PPEI), and 570-682 (DGST…EPSA). At 29 to 692 (GQIRYSVREE…KPNDSDLTLY (664 aa)) the chain is on the extracellular side. Residues asparagine 419 and asparagine 545 are each glycosylated (N-linked (GlcNAc...) asparagine). A glycan (N-linked (GlcNAc...) asparagine) is linked at asparagine 685. Residues 693-713 (LVVAVAAVSCVFLAFVIVLLA) traverse the membrane as a helical segment. The Cytoplasmic portion of the chain corresponds to 714–932 (HRLRRWHKSR…KKKSGKKEKK (219 aa)). Disordered stretches follow at residues 798–841 (LEEE…WPNN) and 902–932 (ATLT…KEKK). Positions 806–841 (FSQQAPPNTDWRFSQAQRPGTSGSQNGDDTGTWPNN) are enriched in polar residues. Residues 922-932 (NKKKSGKKEKK) are compositionally biased toward basic residues.

The protein localises to the cell membrane. Its function is as follows. Potential calcium-dependent cell-adhesion protein. May be involved in the establishment and maintenance of specific neuronal connections in the brain. The protein is Protocadherin gamma-A2 (PCDHGA2) of Pan troglodytes (Chimpanzee).